The following is a 443-amino-acid chain: Methyl-coenzyme M reductase I subunit beta (443 aa).

Coenzyme M is bound at residue Y367. G369 is a binding site for coenzyme B.

Belongs to the methyl-coenzyme M reductase beta subunit family. In terms of assembly, MCR is a hexamer of two alpha, two beta, and two gamma chains, forming a dimer of heterotrimers. Coenzyme F430 serves as cofactor.

It localises to the cytoplasm. The enzyme catalyses coenzyme B + methyl-coenzyme M = methane + coenzyme M-coenzyme B heterodisulfide. It functions in the pathway one-carbon metabolism; methyl-coenzyme M reduction; methane from methyl-coenzyme M: step 1/1. Its activity is regulated as follows. Methyl-coenzyme M reductase activity is inhibited by 3-nitrooxypropanol (3-NOP) in vitro and in vivo, by oxidation of its active site Ni(I), which stops both growth and methanogenesis. Is also inhibited by the reaction product CoM-S-S-CoB. Functionally, component of the methyl-coenzyme M reductase (MCR) I that catalyzes the reductive cleavage of methyl-coenzyme M (CoM-S-CH3 or 2-(methylthio)ethanesulfonate) using coenzyme B (CoB or 7-mercaptoheptanoylthreonine phosphate) as reductant which results in the production of methane and the mixed heterodisulfide of CoB and CoM (CoM-S-S-CoB). This is the final step in methanogenesis. Neither N-6-mercaptohexanoylthreonine phosphate (H-S-HxoTP) nor N-8-mercaptooctanoylthreonine phosphate (H-SOcoTP) nor any other thiol compound such as CoA or CoM can substitute for CoB as the electron donor. This is Methyl-coenzyme M reductase I subunit beta (mcrB) from Methanothermobacter marburgensis (strain ATCC BAA-927 / DSM 2133 / JCM 14651 / NBRC 100331 / OCM 82 / Marburg) (Methanobacterium thermoautotrophicum).